The chain runs to 793 residues: Putative glutamate--cysteine ligase 2-3 (793 aa).

The interval 1–407 (MLASDPRKVG…RFWDRGDTAD (407 aa)) is carboxylate-amine ligase. The interval 367–390 (TEHLPDVEVPPPREPGPKSTGAGR) is disordered. A peptidase M20 region spans residues 408-793 (MTWTESTELD…ALTRLEDQSG (386 aa)).

It in the C-terminal section; belongs to the glutamate--cysteine ligase type 2 family. YbdK subfamily.

It catalyses the reaction L-cysteine + L-glutamate + ATP = gamma-L-glutamyl-L-cysteine + ADP + phosphate + H(+). In terms of biological role, ATP-dependent carboxylate-amine ligase which exhibits weak glutamate--cysteine ligase activity. This is Putative glutamate--cysteine ligase 2-3 from Rhodococcus jostii (strain RHA1).